The following is a 196-amino-acid chain: Alpha-crystallin A chain (196 aa).

Residue methionine 1 is modified to N-acetylmethionine. The segment at 1 to 63 (MDVTIQHPWF…RTVLDSGISE (63 aa)) is required for complex formation with BFSP1 and BFSP2. A Deamidated glutamine; partial modification is found at glutamine 6. Position 45 is a phosphoserine (serine 45). Deamidated glutamine; partial is present on glutamine 50. A sHSP domain is found at 76–185 (HAGNPKNNPI…GHSERAIPVS (110 aa)). Lysine 93 and lysine 122 each carry N6-acetyllysine. Histidine 123 serves as a coordination point for Zn(2+). Asparagine 124 carries the deamidated asparagine; partial modification. Zn(2+) is bound by residues glutamate 125 and histidine 130. Serine 145 is modified (phosphoserine). Position 146 is a deamidated asparagine; partial (asparagine 146). The interval 168-196 (KVQSGLDAGHSERAIPVSREEKPSSAPSS) is disordered. Position 170 is a deamidated glutamine; partial (glutamine 170). Over residues 176-190 (GHSERAIPVSREEKP) the composition is skewed to basic and acidic residues. Residue histidine 177 coordinates Zn(2+). O-linked (GlcNAc) serine glycosylation is present at serine 185.

Belongs to the small heat shock protein (HSP20) family. Heteromer composed of three CRYAA and one CRYAB subunits. Inter-subunit bridging via zinc ions enhances stability, which is crucial as there is no protein turn over in the lens. Can also form homodimers and homotetramers (dimers of dimers) which serve as the building blocks of homooligomers. Within homooligomers, the zinc-binding motif is created from residues of 3 different molecules. His-123 and Glu-125 from one molecule are ligands of the zinc ion, and His-130 and His-177 residues from additional molecules complete the site with tetrahedral coordination geometry. Part of a complex required for lens intermediate filament formation composed of BFSP1, BFSP2 and CRYAA. Post-translationally, acetylation at Lys-93 may increase chaperone activity. Undergoes age-dependent proteolytical cleavage at the C-terminus.

It localises to the cytoplasm. The protein resides in the nucleus. Its function is as follows. Contributes to the transparency and refractive index of the lens. Acts as a chaperone, preventing aggregation of various proteins under a wide range of stress conditions. Required for the correct formation of lens intermediate filaments as part of a complex composed of BFSP1, BFSP2 and CRYAA. This chain is Alpha-crystallin A chain (CRYAA), found in Mesocricetus auratus (Golden hamster).